A 288-amino-acid polypeptide reads, in one-letter code: Peptidyl-tRNA hydrolase, chloroplastic (288 aa).

Residues 1–55 (MKAVAFPAKIANLSFPSNCCSLFFRSPATFLSPALPCRKLTKGIRGLEGLMSQCL) constitute a chloroplast transit peptide. Tyr107 lines the tRNA pocket. The Proton acceptor role is filled by His112. TRNA contacts are provided by Phe157, Asn159, and Asn205.

Belongs to the PTH family. Monomer.

The protein resides in the plastid. It is found in the chloroplast stroma. It carries out the reaction an N-acyl-L-alpha-aminoacyl-tRNA + H2O = an N-acyl-L-amino acid + a tRNA + H(+). In terms of biological role, the natural substrate for this enzyme may be peptidyl-tRNAs which drop off the ribosome during protein synthesis. This chain is Peptidyl-tRNA hydrolase, chloroplastic, found in Arabidopsis thaliana (Mouse-ear cress).